Reading from the N-terminus, the 664-residue chain is Glycine--tRNA ligase beta subunit (664 aa).

It belongs to the class-II aminoacyl-tRNA synthetase family. Tetramer of two alpha and two beta subunits.

The protein resides in the cytoplasm. The enzyme catalyses tRNA(Gly) + glycine + ATP = glycyl-tRNA(Gly) + AMP + diphosphate. The protein is Glycine--tRNA ligase beta subunit of Rickettsia conorii (strain ATCC VR-613 / Malish 7).